We begin with the raw amino-acid sequence, 277 residues long: Bifunctional protein FolD (277 aa).

NADP(+) contacts are provided by residues 159–161 (GRS), serine 184, and isoleucine 225.

It belongs to the tetrahydrofolate dehydrogenase/cyclohydrolase family. Homodimer.

The enzyme catalyses (6R)-5,10-methylene-5,6,7,8-tetrahydrofolate + NADP(+) = (6R)-5,10-methenyltetrahydrofolate + NADPH. It catalyses the reaction (6R)-5,10-methenyltetrahydrofolate + H2O = (6R)-10-formyltetrahydrofolate + H(+). The protein operates within one-carbon metabolism; tetrahydrofolate interconversion. Functionally, catalyzes the oxidation of 5,10-methylenetetrahydrofolate to 5,10-methenyltetrahydrofolate and then the hydrolysis of 5,10-methenyltetrahydrofolate to 10-formyltetrahydrofolate. This Acholeplasma laidlawii (strain PG-8A) protein is Bifunctional protein FolD.